We begin with the raw amino-acid sequence, 663 residues long: Probable potassium transport system protein Kup (663 aa).

The interval methionine 1–alanine 23 is disordered. The next 12 helical transmembrane spans lie at proline 81 to phenylalanine 101, leucine 137 to proline 157, proline 173 to isoleucine 193, valine 201 to valine 221, isoleucine 224 to alanine 244, tryptophan 248 to tyrosine 268, tryptophan 283 to leucine 303, leucine 315 to valine 335, isoleucine 373 to phenylalanine 393, leucine 399 to histidine 419, alanine 433 to valine 453, and valine 455 to threonine 475.

The protein belongs to the HAK/KUP transporter (TC 2.A.72) family.

It is found in the cell inner membrane. It catalyses the reaction K(+)(in) + H(+)(in) = K(+)(out) + H(+)(out). Its function is as follows. Transport of potassium into the cell. Likely operates as a K(+):H(+) symporter. The chain is Probable potassium transport system protein Kup from Anaeromyxobacter sp. (strain Fw109-5).